The sequence spans 449 residues: Procollagen C-endopeptidase enhancer 1 (449 aa).

Positions 1-25 (MLPAATASLLGPLLTACALLPFAQG) are cleaved as a signal peptide. An N-linked (GlcNAc...) asparagine glycan is attached at asparagine 29. 7 cysteine pairs are disulfide-bonded: cysteine 37-cysteine 63, cysteine 90-cysteine 112, cysteine 159-cysteine 186, cysteine 213-cysteine 236, cysteine 318-cysteine 386, cysteine 322-cysteine 389, and cysteine 333-cysteine 437. 2 consecutive CUB domains span residues 37-149 (CGGD…YSGR) and 159-273 (CGGR…YKTL). Position 50 is a phosphoserine (serine 50). The interval 271–321 (KTLPRGTAKEGQGPGPKRGTEPKVKLPPKSQPPEKTEESPSAPDAPTCPKQ) is disordered. Residues 318–437 (CPKQCRRTGT…ILTNLSKRKC (120 aa)) form the NTR domain. Residue asparagine 431 is glycosylated (N-linked (GlcNAc...) asparagine).

Interacts with EFEMP2. Post-translationally, C-terminally processed at multiple positions.

The protein localises to the secreted. In terms of biological role, binds to the C-terminal propeptide of type I procollagen and enhances procollagen C-proteinase activity. C-terminal processed part of PCPE (CT-PCPE) may have an metalloproteinase inhibitory activity. The polypeptide is Procollagen C-endopeptidase enhancer 1 (PCOLCE) (Homo sapiens (Human)).